The chain runs to 325 residues: Secreted frizzled-related protein 3 (325 aa).

The N-terminal stretch at 1 to 32 (MVCGSPGGMLLLRAGLLALAALCLLRVPGARA) is a signal peptide. The FZ domain maps to 33 to 150 (AACEPVRIPL…VYDRGVCISP (118 aa)). Cystine bridges form between Cys-35/Cys-96, Cys-43/Cys-89, Cys-80/Cys-119, Cys-108/Cys-147, and Cys-112/Cys-136. Residue Asn-49 is glycosylated (N-linked (GlcNAc...) asparagine). Positions 178–298 (CKCKPIRATQ…WDMKLRHLGL (121 aa)) constitute an NTR domain. Residues 297–325 (GLSKSDSSNSDSTQSQKSGRNSNPRQARN) are disordered. Residues 299 to 314 (SKSDSSNSDSTQSQKS) are compositionally biased toward low complexity. Residues 315 to 325 (GRNSNPRQARN) show a composition bias toward polar residues.

This sequence belongs to the secreted frizzled-related protein (sFRP) family. Interacts with MYOC. Expressed primarily in the cartilaginous cores of the long bone during embryonic and fetal development and in the appendicular skeleton (6-13 weeks). At 13 weeks of gestation, transcripts were present in early chondroblasts of the tarsal bones of the foot, the carpal bones of the hands and the epiphysis of long bones. Highly expressed in placenta and heart, followed by brain, skeletal muscle, kidney and pancreas. Weakly expressed in lung and liver.

It localises to the secreted. Functionally, soluble frizzled-related proteins (sFRPS) function as modulators of Wnt signaling through direct interaction with Wnts. They have a role in regulating cell growth and differentiation in specific cell types. SFRP3/FRZB appears to be involved in limb skeletogenesis. Antagonist of Wnt8 signaling. Regulates chondrocyte maturation and long bone development. The sequence is that of Secreted frizzled-related protein 3 (FRZB) from Homo sapiens (Human).